A 166-amino-acid polypeptide reads, in one-letter code: Tetranectin-like protein (166 aa).

3 disulfides stabilise this stretch: C37–C47, C64–C160, and C136–C152. A C-type lectin domain is found at 43-161 (IHKKCYLASR…CRSEKRYICE (119 aa)).

The sequence is that of Tetranectin-like protein from Carcharhinus perezii (Reef shark).